We begin with the raw amino-acid sequence, 299 residues long: ATP phosphoribosyltransferase (299 aa).

Belongs to the ATP phosphoribosyltransferase family. Long subfamily. As to quaternary structure, equilibrium between an active dimeric form, an inactive hexameric form and higher aggregates. Interconversion between the various forms is largely reversible and is influenced by the natural substrates and inhibitors of the enzyme. Mg(2+) serves as cofactor.

It is found in the cytoplasm. It catalyses the reaction 1-(5-phospho-beta-D-ribosyl)-ATP + diphosphate = 5-phospho-alpha-D-ribose 1-diphosphate + ATP. It functions in the pathway amino-acid biosynthesis; L-histidine biosynthesis; L-histidine from 5-phospho-alpha-D-ribose 1-diphosphate: step 1/9. Its activity is regulated as follows. Feedback inhibited by histidine. Its function is as follows. Catalyzes the condensation of ATP and 5-phosphoribose 1-diphosphate to form N'-(5'-phosphoribosyl)-ATP (PR-ATP). Has a crucial role in the pathway because the rate of histidine biosynthesis seems to be controlled primarily by regulation of HisG enzymatic activity. The chain is ATP phosphoribosyltransferase from Proteus mirabilis (strain HI4320).